A 295-amino-acid chain; its full sequence is 4-diphosphocytidyl-2-C-methyl-D-erythritol kinase (295 aa).

The active site involves lysine 18. An ATP-binding site is contributed by 101 to 111 (PMGGGIGGGSS). Residue aspartate 143 is part of the active site.

The protein belongs to the GHMP kinase family. IspE subfamily.

The enzyme catalyses 4-CDP-2-C-methyl-D-erythritol + ATP = 4-CDP-2-C-methyl-D-erythritol 2-phosphate + ADP + H(+). Its pathway is isoprenoid biosynthesis; isopentenyl diphosphate biosynthesis via DXP pathway; isopentenyl diphosphate from 1-deoxy-D-xylulose 5-phosphate: step 3/6. Functionally, catalyzes the phosphorylation of the position 2 hydroxy group of 4-diphosphocytidyl-2C-methyl-D-erythritol. The protein is 4-diphosphocytidyl-2-C-methyl-D-erythritol kinase of Vibrio vulnificus (strain YJ016).